We begin with the raw amino-acid sequence, 306 residues long: MKNKKMLKIGMCVGILGLSITSLVTFTGGALQVEAKEKTGQVKHKNQATHKEFSQLEKKFDARLGVYAIDTGTNQTIAYRPNERFAFASTYKALAAGVLLQQNSTKKLDEVITYTKEDLVDYSPVTEKHVDTGMTLGEIAEAAVRYSDNTAGNILFHKIGGPKGYEKALRKMGDRVTMSDRFETELNEAIPGDIRDTSTAKAIARNLKDFTVGNALPHQKRNILTEWMKGNATGDKLIRAGVPTDWVDADKSGAGSYGTRNDIAIVWPPNRSPIIIAILSSKDEKEATYDNQLIKEAAEVVIDAIK.

The first 43 residues, 1–43 (MKNKKMLKIGMCVGILGLSITSLVTFTGGALQVEAKEKTGQVK), serve as a signal peptide directing secretion. Residue S89 is the Acyl-ester intermediate of the active site. Residue E185 is the Proton acceptor of the active site. 251 to 253 (KSG) contributes to the substrate binding site.

The protein belongs to the class-A beta-lactamase family.

Its subcellular location is the secreted. It catalyses the reaction a beta-lactam + H2O = a substituted beta-amino acid. Acts preferentially on penicillins. This is Beta-lactamase 1 (penPC) from Bacillus cereus.